The primary structure comprises 53 residues: UPF0391 membrane protein YtjA (53 aa).

Helical transmembrane passes span 4 to 24 and 30 to 48; these read WGII…GGLA and AAKI…SLFM.

It belongs to the UPF0391 family.

It is found in the cell membrane. This Escherichia coli O6:K15:H31 (strain 536 / UPEC) protein is UPF0391 membrane protein YtjA.